The following is a 130-amino-acid chain: Small ribosomal subunit protein uS9 (130 aa).

The protein belongs to the universal ribosomal protein uS9 family.

The sequence is that of Small ribosomal subunit protein uS9 from Methylococcus capsulatus (strain ATCC 33009 / NCIMB 11132 / Bath).